Here is an 833-residue protein sequence, read N- to C-terminus: Protein PAT1 homolog 1 (833 aa).

Disordered regions lie at residues 279–313 (DMRE…MHGM), 398–427 (NIRQ…SGMP), and 492–549 (EEAT…DKKL). The segment covering 303–313 (PSLSPGGMHGM) has biased composition (low complexity). Residues 398-408 (NIRQNGPQFSH) show a composition bias toward polar residues.

This sequence belongs to the PAT1 family.

Its subcellular location is the cytoplasm. The protein localises to the P-body. Its function is as follows. RNA-binding protein involved in deadenylation-dependent decapping of mRNAs, leading to the degradation of mRNAs. Acts as a scaffold protein that connects deadenylation and decapping machinery. Required for the recruitment of P-body components such as cgh-1 in somatic blastomeres. May play a role in recruiting the decapping enzyme dcap-1 to cytoplasmic puncta in the cell body of the posterior touch receptor neuron, PLM. The protein is Protein PAT1 homolog 1 of Caenorhabditis elegans.